The following is a 669-amino-acid chain: Alpha-1,6-mannosylglycoprotein 6-beta-N-acetylglucosaminyltransferase (669 aa).

Over 1 to 7 (MRRRHRC) the chain is Cytoplasmic. Residues 8 to 28 (VALLFIFSAFITPLGFFYYTI) form a helical; Signal-anchor for type II membrane protein membrane-spanning segment. Residues 29–669 (SNESKRYSEE…EQHAICKKCL (641 aa)) lie on the Lumenal side of the membrane. 4 N-linked (GlcNAc...) asparagine glycosylation sites follow: Asn-30, Asn-412, Asn-437, and Asn-626.

It belongs to the glycosyltransferase 18 family. In terms of tissue distribution, expressed in a complex subset of neurons in larvae and in the spermathecal and pharyngeal-intestinal valves and certain vulval cells of adults.

Its subcellular location is the golgi apparatus membrane. The catalysed reaction is N(4)-{beta-D-GlcNAc-(1-&gt;2)-[beta-D-GlcNAc-(1-&gt;4)]-alpha-D-Man-(1-&gt;3)-[beta-D-GlcNAc-(1-&gt;2)-alpha-D-Man-(1-&gt;6)]-beta-D-Man-(1-&gt;4)-beta-D-GlcNAc-(1-&gt;4)-beta-D-GlcNAc}-L-asparaginyl-[protein] + UDP-N-acetyl-alpha-D-glucosamine = N(4)-{beta-D-GlcNAc-(1-&gt;2)-[beta-D-GlcNAc-(1-&gt;4)]-alpha-D-Man-(1-&gt;3)-[beta-D-GlcNAc-(1-&gt;2)-[beta-D-GlcNAc-(1-&gt;6)]-alpha-D-Man-(1-&gt;6)]-beta-D-Man-(1-&gt;4)-beta-D-GlcNAc-(1-&gt;4)-beta-D-GlcNAc}-L-asparaginyl-[protein] + UDP + H(+). The protein operates within protein modification; protein glycosylation. Functionally, catalyzes the addition of N-acetylglucosamine (GlcNAc) in beta 1-6 linkage to the alpha-linked mannose of biantennary N-linked oligosaccharides. The polypeptide is Alpha-1,6-mannosylglycoprotein 6-beta-N-acetylglucosaminyltransferase (gly-2) (Caenorhabditis elegans).